Consider the following 126-residue polypeptide: Prefoldin subunit beta (126 aa).

It belongs to the prefoldin subunit beta family. As to quaternary structure, heterohexamer of two alpha and four beta subunits.

It is found in the cytoplasm. Molecular chaperone capable of stabilizing a range of proteins. Seems to fulfill an ATP-independent, HSP70-like function in archaeal de novo protein folding. The polypeptide is Prefoldin subunit beta (pfdB) (Pyrobaculum aerophilum (strain ATCC 51768 / DSM 7523 / JCM 9630 / CIP 104966 / NBRC 100827 / IM2)).